Reading from the N-terminus, the 468-residue chain is Uronate isomerase (468 aa).

The protein belongs to the metallo-dependent hydrolases superfamily. Uronate isomerase family.

It catalyses the reaction D-glucuronate = D-fructuronate. The catalysed reaction is aldehydo-D-galacturonate = keto-D-tagaturonate. It functions in the pathway carbohydrate metabolism; pentose and glucuronate interconversion. The chain is Uronate isomerase from Endomicrobium trichonymphae.